A 107-amino-acid polypeptide reads, in one-letter code: Protein TAP1 (107 aa).

Positions 1–23 (MESKRVDVLVGLMLIMAIFGVHS) are cleaved as a signal peptide.

In terms of tissue distribution, stamen.

This chain is Protein TAP1 (TAP1), found in Antirrhinum majus (Garden snapdragon).